A 137-amino-acid chain; its full sequence is uncharacterized protein (137 aa).

Residues 4–21 (ISWQIVLAVIGVVAGFII) traverse the membrane as a helical segment.

The protein localises to the membrane. This is an uncharacterized protein from Archaeoglobus fulgidus (strain ATCC 49558 / DSM 4304 / JCM 9628 / NBRC 100126 / VC-16).